The following is a 292-amino-acid chain: Short chain dehydrogenase/reductase CPUR_05418 (292 aa).

NADP(+)-binding residues include Ile44 and Arg156. Residues Ser172 and Tyr186 each act as proton donor in the active site. Tyr186, Lys190, Ile221, and Thr223 together coordinate NADP(+). Lys190 serves as the catalytic Lowers pKa of active site Tyr.

The protein belongs to the short-chain dehydrogenases/reductases (SDR) family.

The protein operates within secondary metabolite biosynthesis. Short chain dehydrogenase/reductase; part of the ergochrome gene cluster responsible for the typical purple-black color of the ergot sclerotia. The ergochrome gene cluster produces several ergot pigments including the yellow ergochrome secalonic acid and its derivatives, as well as the red anthraquinones endocrocin and clavorubin. The pathway begins with the synthesis of atrochrysone thioester by the polyketide synthase (PKS) CPUR_05437. The atrochrysone carboxyl ACP thioesterase CPUR_05436 then breaks the thioester bond and releases the atrochrysone carboxylic acid from CPUR_05437. The atrochrysone carboxylic acid is then converted to atrochrysone which is further transformed into emodin anthrone. The next step is performed by the anthrone oxygenase CPUR_05434 that catalyzes the oxidation of emodinanthrone to emodin. Emodin is further modified to yield monodictyphenone via several steps involving CPUR_05427, CPUR_05428, CPUR_05429 and CPUR_05430. The short chain dehydrogenase/reductase CPUR_05418 then catalyzes the C-5 ketoreduction to give the xanthone skeleton of the monomeric units. Ergochromes formation requires further dimerization steps of different xanthone units, probably catalyzed by the cytochrome P450 monooxygenase CPUR_05419. CPUR_05425, CPUR_05426 and CPUR_05431 are unique to Claviceps, thus it is likely that they are involved in further modification of xanthone units or in their dimerization. The yellow ergochromes and the red anthraquinone pigments endocrocin and clavorubin are products from the same PKS derived precursors and the latter are likely shunt products in the pathway of xanthone biosynthesis. It is proposed that atrochrysone carboxylic acid released from the PKS CPUR_05437 can also be converted to endocrocin anthrone which is further oxidized into endocrocin by CPUR_05435. Endocrocin could be then modified to clavorubin, possibly by CPUR_05423 and CPUR_05431. Clavorubin is the principal anthraquinone metabolite produced by the cluster with a much higher yield compared to endocrocin. The chain is Short chain dehydrogenase/reductase CPUR_05418 from Claviceps purpurea (strain 20.1) (Ergot fungus).